We begin with the raw amino-acid sequence, 302 residues long: MSEVSLQAVKDYLLDLQDRICDALGAEDGAATFREDSWEREQGGGGRSRVLENGAVIEKGGVNFSHVFGEQLPPSATEARPELAGRSFQAMGVSLVIHPKNPYVPTSHANVRFFVAEKEGEAPVWWFGGGFDLTPYYGFEEDVVHWHQTAKVACQPFGKEIYPEFKTWCDDYFYLKHRNEPRGVGGLFFDDLNRFDFDTSFALMRSIGDAYVPAYQPILARRKDHEFGDRERQFQLYRRGRYVEFNLVYDRGTIFGLQSGGRTESILMSLPPLVRWDYDYHPEPNSAESELYHKFLIHREWV.

Serine 94 is a binding site for substrate. Positions 98 and 108 each coordinate a divalent metal cation. Histidine 108 (proton donor) is an active-site residue. 110–112 serves as a coordination point for substrate; sequence NVR. Residues histidine 147 and histidine 177 each contribute to the a divalent metal cation site. The interval 242 to 277 is important for dimerization; the sequence is YVEFNLVYDRGTIFGLQSGGRTESILMSLPPLVRWD. A substrate-binding site is contributed by 260–262; the sequence is GGR.

The protein belongs to the aerobic coproporphyrinogen-III oxidase family. As to quaternary structure, homodimer. The cofactor is a divalent metal cation.

It localises to the cytoplasm. The enzyme catalyses coproporphyrinogen III + O2 + 2 H(+) = protoporphyrinogen IX + 2 CO2 + 2 H2O. Its pathway is porphyrin-containing compound metabolism; protoporphyrin-IX biosynthesis; protoporphyrinogen-IX from coproporphyrinogen-III (O2 route): step 1/1. Involved in the heme biosynthesis. Catalyzes the aerobic oxidative decarboxylation of propionate groups of rings A and B of coproporphyrinogen-III to yield the vinyl groups in protoporphyrinogen-IX. In Alcanivorax borkumensis (strain ATCC 700651 / DSM 11573 / NCIMB 13689 / SK2), this protein is Oxygen-dependent coproporphyrinogen-III oxidase.